The primary structure comprises 150 residues: Transcriptional regulator MraZ (150 aa).

SpoVT-AbrB domains lie at 5-51 and 80-123; these read VANL…PQPE and ATEC…DEDT.

This sequence belongs to the MraZ family. In terms of assembly, forms oligomers.

Its subcellular location is the cytoplasm. The protein localises to the nucleoid. The sequence is that of Transcriptional regulator MraZ from Thioalkalivibrio sulfidiphilus (strain HL-EbGR7).